The following is a 237-amino-acid chain: Uridylate kinase (237 aa).

Residue 9–12 (KFSG) coordinates ATP. Residues 17 to 22 (GEAGYG) form an involved in allosteric activation by GTP region. A UMP-binding site is contributed by Gly-51. Positions 52 and 56 each coordinate ATP. Residues Asp-72 and 133-140 (TGNPFFTT) each bind UMP. Positions 160, 166, and 169 each coordinate ATP.

It belongs to the UMP kinase family. As to quaternary structure, homohexamer.

Its subcellular location is the cytoplasm. The enzyme catalyses UMP + ATP = UDP + ADP. Its pathway is pyrimidine metabolism; CTP biosynthesis via de novo pathway; UDP from UMP (UMPK route): step 1/1. With respect to regulation, allosterically activated by GTP. Inhibited by UTP. In terms of biological role, catalyzes the reversible phosphorylation of UMP to UDP. The polypeptide is Uridylate kinase (Sulfurimonas denitrificans (strain ATCC 33889 / DSM 1251) (Thiomicrospira denitrificans (strain ATCC 33889 / DSM 1251))).